A 427-amino-acid chain; its full sequence is Glutamate-1-semialdehyde 2,1-aminomutase (427 aa).

Position 265 is an N6-(pyridoxal phosphate)lysine (K265).

The protein belongs to the class-III pyridoxal-phosphate-dependent aminotransferase family. HemL subfamily. As to quaternary structure, homodimer. It depends on pyridoxal 5'-phosphate as a cofactor.

Its subcellular location is the cytoplasm. The catalysed reaction is (S)-4-amino-5-oxopentanoate = 5-aminolevulinate. It participates in porphyrin-containing compound metabolism; protoporphyrin-IX biosynthesis; 5-aminolevulinate from L-glutamyl-tRNA(Glu): step 2/2. The polypeptide is Glutamate-1-semialdehyde 2,1-aminomutase (Burkholderia orbicola (strain MC0-3)).